The primary structure comprises 568 residues: Sulfite reductase [NADPH] hemoprotein beta-component (568 aa).

[4Fe-4S] cluster is bound by residues cysteine 425, cysteine 431, cysteine 470, and cysteine 474. Cysteine 474 contributes to the siroheme binding site.

It belongs to the nitrite and sulfite reductase 4Fe-4S domain family. In terms of assembly, alpha(8)-beta(8). The alpha component is a flavoprotein, the beta component is a hemoprotein. The cofactor is siroheme. [4Fe-4S] cluster serves as cofactor.

It catalyses the reaction hydrogen sulfide + 3 NADP(+) + 3 H2O = sulfite + 3 NADPH + 4 H(+). The protein operates within sulfur metabolism; hydrogen sulfide biosynthesis; hydrogen sulfide from sulfite (NADPH route): step 1/1. In terms of biological role, component of the sulfite reductase complex that catalyzes the 6-electron reduction of sulfite to sulfide. This is one of several activities required for the biosynthesis of L-cysteine from sulfate. The sequence is that of Sulfite reductase [NADPH] hemoprotein beta-component from Xanthomonas euvesicatoria pv. vesicatoria (strain 85-10) (Xanthomonas campestris pv. vesicatoria).